The primary structure comprises 522 residues: Ankyrin repeat and death domain-containing protein 1A (522 aa).

ANK repeat units lie at residues Pro-14–Ala-43, Val-47–Glu-76, Phe-90–Cys-119, Asp-123–Leu-152, Leu-158–Val-187, Glu-191–Glu-220, Glu-224–Ala-253, Lys-257–Val-286, Gln-290–Ala-319, Arg-323–Leu-352, and Gln-356–Trp-385. A Death domain is found at Ser-413 to Arg-501.

The sequence is that of Ankyrin repeat and death domain-containing protein 1A (ANKDD1A) from Homo sapiens (Human).